A 180-amino-acid polypeptide reads, in one-letter code: Large ribosomal subunit protein uL6 (180 aa).

Belongs to the universal ribosomal protein uL6 family. As to quaternary structure, part of the 50S ribosomal subunit.

Its function is as follows. This protein binds to the 23S rRNA, and is important in its secondary structure. It is located near the subunit interface in the base of the L7/L12 stalk, and near the tRNA binding site of the peptidyltransferase center. The sequence is that of Large ribosomal subunit protein uL6 from Clostridium beijerinckii (strain ATCC 51743 / NCIMB 8052) (Clostridium acetobutylicum).